The primary structure comprises 459 residues: MNRLPSSASALACSAHALNLIEKRTLNHEEMKALNREVIDYFKEHVNPGFLEYRKSVTAGGDYGAVEWQAGSLNTLVDTQGQEFIDCLGGFGIFNVGHRNPVVVSAVQNQLAKQPLHSQELLDPLRAMLAKTLAALTPGKLKYSFFCNSGTESVEAALKLAKAYQSPRGKFTFIATSGAFHGKSLGALSATAKSTFRRPFMPLLPGFRHVPFGNIDAMSMAFSEGKKTGDEIAAVILEPIQGEGGVILPPQGYLTEVRKLCDEFGALMILDEVQTGMGRTGKMFACEHENVQPDILCLAKALGGGVMPIGATIATEEVFSVLFDNPFLHTTTFGGNPLACAAALATINVLLEQNLPAQAEQKGDTLLDGFRQLAREYPNLVHEARGKGMLMAIEFVDNETGYRFASEMFRQRVLVAGTLNNAKTIRIEPPLTLTIELCEQVLKSARNALAAMQVSVEEV.

Pyridoxal 5'-phosphate contacts are provided by residues 150-151 and glutamine 274; that span reads GT. Lysine 300 carries the post-translational modification N6-(pyridoxal phosphate)lysine. Threonine 332 contributes to the pyridoxal 5'-phosphate binding site.

This sequence belongs to the class-III pyridoxal-phosphate-dependent aminotransferase family. Putrescine aminotransferase subfamily. Requires pyridoxal 5'-phosphate as cofactor.

It carries out the reaction an alkane-alpha,omega-diamine + 2-oxoglutarate = an omega-aminoaldehyde + L-glutamate. The catalysed reaction is putrescine + 2-oxoglutarate = 1-pyrroline + L-glutamate + H2O. The enzyme catalyses cadaverine + 2-oxoglutarate = 5-aminopentanal + L-glutamate. Its pathway is amine and polyamine degradation; putrescine degradation; 4-aminobutanal from putrescine (transaminase route): step 1/1. In terms of biological role, catalyzes the aminotransferase reaction from putrescine to 2-oxoglutarate, leading to glutamate and 4-aminobutanal, which spontaneously cyclizes to form 1-pyrroline. This is the first step in one of two pathways for putrescine degradation, where putrescine is converted into 4-aminobutanoate (gamma-aminobutyrate or GABA) via 4-aminobutanal. Also functions as a cadaverine transaminase in a a L-lysine degradation pathway to succinate that proceeds via cadaverine, glutarate and L-2-hydroxyglutarate. This is Putrescine aminotransferase from Salmonella heidelberg (strain SL476).